Reading from the N-terminus, the 623-residue chain is Putative ABC transporter ATP-binding protein MG014 homolog (623 aa).

The region spanning 16–325 is the ABC transmembrane type-1 domain; it reads LILAPLFTFA…YIVLGLILTS (310 aa). Transmembrane regions (helical) follow at residues 27-47, 86-106, 157-177, 180-200, 266-286, and 307-327; these read IIID…VFSI, VILL…CASI, FLRL…FAIA, SDMS…IGIL, NIPF…LLVF, and IFAF…TSLT. The ABC transporter domain maps to 365–611; that stretch reads LEFKNVAFGL…CDIYVKMKQA (247 aa). Residue 400–407 coordinates ATP; sequence GPTGSGKS.

Belongs to the ABC transporter superfamily.

Its subcellular location is the cell membrane. This chain is Putative ABC transporter ATP-binding protein MG014 homolog, found in Mycoplasma pneumoniae (strain ATCC 29342 / M129 / Subtype 1) (Mycoplasmoides pneumoniae).